The primary structure comprises 97 residues: Large ribosomal subunit protein uL23 (97 aa).

The protein belongs to the universal ribosomal protein uL23 family. In terms of assembly, part of the 50S ribosomal subunit. Contacts protein L29, and trigger factor when it is bound to the ribosome.

In terms of biological role, one of the early assembly proteins it binds 23S rRNA. One of the proteins that surrounds the polypeptide exit tunnel on the outside of the ribosome. Forms the main docking site for trigger factor binding to the ribosome. The sequence is that of Large ribosomal subunit protein uL23 from Methylococcus capsulatus (strain ATCC 33009 / NCIMB 11132 / Bath).